Consider the following 339-residue polypeptide: MPSMIVVGGQWGDEGKGSIIAYLALHDEPEIIARGGVGTNAGHSVFINGKKYAVRQLPTGFMQRKARLLVGAGVLVDPEVFFHELEHLKDFNVKERVGIDYRCAIIEPKHKELDRSNGYLHGKIGTTGSGCGPANADRVMRKAKQAKDIKELEPYLTDVAAEVNDALDEGALVLVEGTQGFGLSLYYGTYPYVTSKDVTASSVAADVGIGPTRVDEVIVVFKSFPTRVGAGPFPTEMPMEEADRLGLVEYGTVTGRRRRVGWFDFEMARYSARVNGATMLAVTMLDKYDKEAFGVTDYDKLPRKAKEFIEEIEEKVGVPVGLIKTGPELEHIIDRRDTI.

Residues 12–18 and 42–44 contribute to the GTP site; these read GDEGKGS and GHS. Asp13 acts as the Proton acceptor in catalysis. Asp13 and Gly42 together coordinate Mg(2+). IMP is bound by residues 13-16, 40-43, Thr127, Arg141, Gln179, Thr194, and Arg256; these read DEGK and NAGH. His43 serves as the catalytic Proton donor. 252–258 is a substrate binding site; it reads TVTGRRR. Residues Arg258, 284 to 286, and 324 to 326 contribute to the GTP site; these read MLD and KTG.

The protein belongs to the adenylosuccinate synthetase family. Homodimer. It depends on Mg(2+) as a cofactor.

It localises to the cytoplasm. The enzyme catalyses IMP + L-aspartate + GTP = N(6)-(1,2-dicarboxyethyl)-AMP + GDP + phosphate + 2 H(+). It functions in the pathway purine metabolism; AMP biosynthesis via de novo pathway; AMP from IMP: step 1/2. In terms of biological role, plays an important role in the de novo pathway of purine nucleotide biosynthesis. Catalyzes the first committed step in the biosynthesis of AMP from IMP. In Pyrococcus sp. (strain ST700), this protein is Adenylosuccinate synthetase.